A 1197-amino-acid polypeptide reads, in one-letter code: Protein timeless homolog (1197 aa).

The interval M1–S309 is required for homodimerization and for interaction with CRY1 and CHEK1. S281 carries the phosphoserine modification. Disordered regions lie at residues S647 to Q674 and R943 to N1002. A compositionally biased stretch (acidic residues) spans P656 to L673. Residues S810 to S949 are DNA-binding domain. Residues Q963 to E985 show a composition bias toward acidic residues. Residues G986–S999 show a composition bias toward low complexity. The interval S997–L1095 is interaction with PARP1. Residues S1071 and S1084 each carry the phosphoserine modification. Residues I1079–D1197 are required for nuclear localization. T1086 carries the post-translational modification Phosphothreonine. A disordered region spans residues L1088–D1197. Acidic residues-rich tracts occupy residues E1099–E1109 and T1143–W1153. Position 1165 is a phosphoserine (S1165).

This sequence belongs to the timeless family. Monomer. Homodimer or homomultimer. Component of the circadian core oscillator, which includes the CRY proteins, CLOCK or NPAS2, ARTNL/BMAL1 or ARTNL2/BMAL2, CSKN1D and/or CSNK1E, TIMELESS, and the PER proteins. Interacts directly with PER2; the interaction with PER2 is via its second PAS domain. Interacts directly with PER1 and PER3. Interacts with CRY1. Interacts with CRY2. Interacts with CHEK1, ATR and ATRIP. Interacts with CLSPN. Interacts (via N-terminus) with TIPIN. The TIMELESS-TIPIN heterodimer binds preferably to guanine-rich quadruplex-forming (G4) DNA structures. Associates with the MCM2-7 complex. Interacts with DNA polymerases alpha, delta and epsilon. Interacts with DDX11; this interaction increases recruitment of both proteins onto chromatin in response to replication stress induction by hydroxyurea. Interacts with PARP1; interaction is direct and independent of poly-ADP-ribose. In terms of tissue distribution, predominantly and robustly expressed in proliferative organs (spleen, thymus, intestine and testis) compared to those more differentiated such as kidney and liver (at protein level). Expressed in all tissues examined including brain, heart, lung, liver, skeletal muscle, kidney, placenta, pancreas, spleen, thymus and testis. Strongly expressed in the suprachiasmatic nucleus (SCN) and pars tuberalis, moderately in the cingulate cortex, pyrimidal cell layer of the piriform cortex, periventricular part of the caudate putamen, and granular layer of the cerebellum, and weakly in the cerebral cortex, gyrus dentatus, hippocampus and thalamic nuclei. In embryonic kidney, expression is highest in regions of active ureteric bud cell branching.

Its subcellular location is the nucleus. The protein resides in the chromosome. Its function is as follows. Plays an important role in the control of DNA replication, maintenance of replication fork stability, maintenance of genome stability throughout normal DNA replication, DNA repair and in the regulation of the circadian clock. Required to stabilize replication forks during DNA replication by forming a complex with TIPIN: this complex regulates DNA replication processes under both normal and stress conditions, stabilizes replication forks and influences both CHEK1 phosphorylation and the intra-S phase checkpoint in response to genotoxic stress. During DNA replication, inhibits the CMG complex ATPase activity and activates DNA polymerases catalytic activities, coupling DNA unwinding and DNA synthesis. TIMELESS promotes TIPIN nuclear localization. Plays a role in maintaining processive DNA replication past genomic guanine-rich DNA sequences that form G-quadruplex (G4) structures, possibly together with DDX1. Involved in cell survival after DNA damage or replication stress by promoting DNA repair. In response to double-strand breaks (DSBs), accumulates at DNA damage sites and promotes homologous recombination repair via its interaction with PARP1. May be specifically required for the ATR-CHEK1 pathway in the replication checkpoint induced by hydroxyurea or ultraviolet light. Involved in the determination of period length and in the DNA damage-dependent phase advancing of the circadian clock. Negatively regulates CLOCK|NPAS2-ARTNL/BMAL1|ARTNL2/BMAL2-induced transactivation of PER1 possibly via translocation of PER1 into the nucleus. May also play an important role in epithelial cell morphogenesis and formation of branching tubules. The chain is Protein timeless homolog from Mus musculus (Mouse).